The following is a 178-amino-acid chain: Large ribosomal subunit protein uL6 (178 aa).

Belongs to the universal ribosomal protein uL6 family. As to quaternary structure, part of the 50S ribosomal subunit.

This protein binds to the 23S rRNA, and is important in its secondary structure. It is located near the subunit interface in the base of the L7/L12 stalk, and near the tRNA binding site of the peptidyltransferase center. In Frankia casuarinae (strain DSM 45818 / CECT 9043 / HFP020203 / CcI3), this protein is Large ribosomal subunit protein uL6.